We begin with the raw amino-acid sequence, 218 residues long: Small ribosomal subunit protein uS3c (218 aa).

The 72-residue stretch at 47-118 folds into the KH type-2 domain; the sequence is VQKNMKTSSG…KLNIAITRIE (72 aa).

The protein belongs to the universal ribosomal protein uS3 family. Part of the 30S ribosomal subunit.

The protein localises to the plastid. Its subcellular location is the chloroplast. The chain is Small ribosomal subunit protein uS3c (rps3) from Helianthus annuus (Common sunflower).